An 80-amino-acid chain; its full sequence is uncharacterized protein (80 aa).

It belongs to the BolA/IbaG family.

This is an uncharacterized protein from Buchnera aphidicola subsp. Schizaphis graminum (strain Sg).